The chain runs to 383 residues: S-(hydroxymethyl)glutathione dehydrogenase (383 aa).

Cysteine 51 lines the Zn(2+) pocket. Histidine 52 contributes to the NAD(+) binding site. Residues histidine 73, glutamate 74, cysteine 103, cysteine 106, cysteine 109, cysteine 117, and cysteine 180 each contribute to the Zn(2+) site. Residues 205–210 (GAGCVG), aspartate 229, and 298–300 (IGV) contribute to the NAD(+) site.

This sequence belongs to the zinc-containing alcohol dehydrogenase family. Class-III subfamily. It depends on Zn(2+) as a cofactor.

The enzyme catalyses a primary alcohol + NAD(+) = an aldehyde + NADH + H(+). The catalysed reaction is a secondary alcohol + NAD(+) = a ketone + NADH + H(+). It carries out the reaction S-(hydroxymethyl)glutathione + NADP(+) = S-formylglutathione + NADPH + H(+). It catalyses the reaction S-(hydroxymethyl)glutathione + NAD(+) = S-formylglutathione + NADH + H(+). The enzyme catalyses S-nitrosoglutathione + NADH + H(+) = S-(hydroxysulfenamide)glutathione + NAD(+). In terms of biological role, oxidizes long-chain alcohols and, in the presence of glutathione, is able to oxidize formaldehyde. Also acts as a S-nitroso-glutathione reductase by catalyzing the NADH-dependent reduction of S-nitrosoglutathione, thereby regulating protein S-nitrosylation. In Aspergillus oryzae (strain ATCC 42149 / RIB 40) (Yellow koji mold), this protein is S-(hydroxymethyl)glutathione dehydrogenase (FDH1).